A 418-amino-acid polypeptide reads, in one-letter code: D-amino acid dehydrogenase (418 aa).

Residue valine 3–tryptophan 17 coordinates FAD.

This sequence belongs to the DadA oxidoreductase family. FAD serves as cofactor.

The enzyme catalyses a D-alpha-amino acid + A + H2O = a 2-oxocarboxylate + AH2 + NH4(+). Functionally, oxidative deamination of D-amino acids. In Neisseria meningitidis serogroup A / serotype 4A (strain DSM 15465 / Z2491), this protein is D-amino acid dehydrogenase.